The primary structure comprises 408 residues: MKDVLERFLGYIKVDTQSSEESDTVPTTKTQLEFAKKLGEELKAIGLKDVSVDENGYVMATLESNIDKKVPTIGFIAHMDTSPDLSGTNINPRIVEKYDGQDIVLNKEKNIVLKINEFPEILEYKGQDIVVTDGNTLLGADDKAGIAEIITAMEYLINHPEIKHGTIKVGFTPDEEVGKGADHFDVKKFGADLAYTLDGGGIGELECETFNAAKAKVIIEGRNVHPGSAKNKMTNAVLVANKFINMLPENEVPERTEGYEGFFHLLSVKSEVETAELNYIIRDFDRKKFEERKEQIKEVGKKINEEYNKEIVCVKVEDQYYNMKEKIDEVKYVVDIAYDAMKAIDIEPILVPIRGGTDGSRLSFMGLPTPNLFAGGHNFHGRFEFVPVLSMEKAAELVVKIAELYANR.

Histidine 78 contributes to the Zn(2+) binding site. The active site involves aspartate 80. Position 141 (aspartate 141) interacts with Zn(2+). The active-site Proton acceptor is glutamate 175. Residues glutamate 176, aspartate 198, and histidine 380 each contribute to the Zn(2+) site.

The protein belongs to the peptidase M20B family. Zn(2+) serves as cofactor.

It localises to the cytoplasm. The enzyme catalyses Release of the N-terminal residue from a tripeptide.. Its function is as follows. Cleaves the N-terminal amino acid of tripeptides. In Clostridium botulinum (strain ATCC 19397 / Type A), this protein is Peptidase T.